The chain runs to 122 residues: Ribosomal silencing factor RsfS (122 aa).

This sequence belongs to the Iojap/RsfS family. Interacts with ribosomal protein uL14 (rplN).

The protein localises to the cytoplasm. In terms of biological role, functions as a ribosomal silencing factor. Interacts with ribosomal protein uL14 (rplN), blocking formation of intersubunit bridge B8. Prevents association of the 30S and 50S ribosomal subunits and the formation of functional ribosomes, thus repressing translation. This chain is Ribosomal silencing factor RsfS, found in Chromobacterium violaceum (strain ATCC 12472 / DSM 30191 / JCM 1249 / CCUG 213 / NBRC 12614 / NCIMB 9131 / NCTC 9757 / MK).